A 739-amino-acid chain; its full sequence is NAD(P)H-quinone oxidoreductase subunit 5, chloroplastic (739 aa).

Helical transmembrane passes span 9-29, 40-60, 89-109, 125-145, 147-167, 185-205, 224-244, 258-278, 283-303, 327-347, 354-374, 396-416, 425-445, 546-566, 605-625, and 718-738; these read LIIP…LIFF, WAFP…NLSI, IDSL…LVLI, FAYM…SNLI, IHIF…FWFT, GDFG…SFEF, LFVI…SAQF, TPIS…FLVA, LFTV…ITIL, LGYI…FHLI, ALLF…VGYS, TAFF…CFWS, WLYS…TAFY, LFPL…GIPF, IFSV…YRPI, and ISSY…IFQV.

It belongs to the complex I subunit 5 family. In terms of assembly, NDH is composed of at least 16 different subunits, 5 of which are encoded in the nucleus.

It localises to the plastid. Its subcellular location is the chloroplast thylakoid membrane. It carries out the reaction a plastoquinone + NADH + (n+1) H(+)(in) = a plastoquinol + NAD(+) + n H(+)(out). The catalysed reaction is a plastoquinone + NADPH + (n+1) H(+)(in) = a plastoquinol + NADP(+) + n H(+)(out). Functionally, NDH shuttles electrons from NAD(P)H:plastoquinone, via FMN and iron-sulfur (Fe-S) centers, to quinones in the photosynthetic chain and possibly in a chloroplast respiratory chain. The immediate electron acceptor for the enzyme in this species is believed to be plastoquinone. Couples the redox reaction to proton translocation, and thus conserves the redox energy in a proton gradient. The chain is NAD(P)H-quinone oxidoreductase subunit 5, chloroplastic (ndhF) from Buxus microphylla (Littleleaf boxwood).